The following is a 411-amino-acid chain: Serine--tRNA ligase (411 aa).

Residue 226–228 (TSE) participates in L-serine binding. Residue 257–259 (RQE) participates in ATP binding. Residue glutamate 280 participates in L-serine binding. Residue 344-347 (EISS) participates in ATP binding. L-serine is bound at residue serine 379.

The protein belongs to the class-II aminoacyl-tRNA synthetase family. Type-1 seryl-tRNA synthetase subfamily. In terms of assembly, homodimer. The tRNA molecule binds across the dimer.

It is found in the cytoplasm. The enzyme catalyses tRNA(Ser) + L-serine + ATP = L-seryl-tRNA(Ser) + AMP + diphosphate + H(+). The catalysed reaction is tRNA(Sec) + L-serine + ATP = L-seryl-tRNA(Sec) + AMP + diphosphate + H(+). Its pathway is aminoacyl-tRNA biosynthesis; selenocysteinyl-tRNA(Sec) biosynthesis; L-seryl-tRNA(Sec) from L-serine and tRNA(Sec): step 1/1. In terms of biological role, catalyzes the attachment of serine to tRNA(Ser). Is also able to aminoacylate tRNA(Sec) with serine, to form the misacylated tRNA L-seryl-tRNA(Sec), which will be further converted into selenocysteinyl-tRNA(Sec). This is Serine--tRNA ligase from Campylobacter lari (strain RM2100 / D67 / ATCC BAA-1060).